Here is a 562-residue protein sequence, read N- to C-terminus: MIIVSTELNKISKRLTQDPSQPASQAMMYGAGFTDEDMKKPIVGIGSTGFDGNTCNMHLNILAGQVKGSITRGGMVGLGFNTIGVSDGISMGTEGMRFSLVSRDVIADSIETICEAHYYDALVTVVGCDKNMPGALIAMARLNRPSIMVYGGTIHSGHYKGEKLNIVSAFEALGKKVAGTITEEDYQGVIKNACPGAGACGGMYTANTMASAIEAMGLTLPYSSTAPATSEKKKAETLALGKAMMHLLEKDIKPRDIMTFEAFENAIRVILVLGGSTNAVMHLIAIAKAAGVKLTIDDFQRIGNTTPLLADLKPSGKYMMEDMDAIGGVPSVMRLLAKHNLLHLDCMTVTGKTVGENLKEAQDLPTDQDLMYAWENPIKQTGHLQILYGNLAPQGSVAKITGKEGTYFEGPARVYDSEEAVNKGLEANEVKSGEVIVIRYVGPKGGPGMPEMLKPTALLMGLGLGNECALITDGRFSGGTHGFVVGHITPEATEGGMIGLVKNGDIIRIDAVNRVLEVKISEEEVTKRRAAWVKPAPRATSGVLYKYMKLVSSASEGCVTDN.

Cys55 contributes to the [2Fe-2S] cluster binding site. Position 87 (Asp87) interacts with Mg(2+). Cys128 is a [2Fe-2S] cluster binding site. Mg(2+)-binding residues include Asp129 and Lys130. The residue at position 130 (Lys130) is an N6-carboxylysine. Position 200 (Cys200) interacts with [2Fe-2S] cluster. Position 451 (Glu451) interacts with Mg(2+). Catalysis depends on Ser477, which acts as the Proton acceptor.

This sequence belongs to the IlvD/Edd family. As to quaternary structure, homodimer. It depends on [2Fe-2S] cluster as a cofactor. Requires Mg(2+) as cofactor.

The enzyme catalyses (2R)-2,3-dihydroxy-3-methylbutanoate = 3-methyl-2-oxobutanoate + H2O. It catalyses the reaction (2R,3R)-2,3-dihydroxy-3-methylpentanoate = (S)-3-methyl-2-oxopentanoate + H2O. It functions in the pathway amino-acid biosynthesis; L-isoleucine biosynthesis; L-isoleucine from 2-oxobutanoate: step 3/4. The protein operates within amino-acid biosynthesis; L-valine biosynthesis; L-valine from pyruvate: step 3/4. Functions in the biosynthesis of branched-chain amino acids. Catalyzes the dehydration of (2R,3R)-2,3-dihydroxy-3-methylpentanoate (2,3-dihydroxy-3-methylvalerate) into 2-oxo-3-methylpentanoate (2-oxo-3-methylvalerate) and of (2R)-2,3-dihydroxy-3-methylbutanoate (2,3-dihydroxyisovalerate) into 2-oxo-3-methylbutanoate (2-oxoisovalerate), the penultimate precursor to L-isoleucine and L-valine, respectively. This is Dihydroxy-acid dehydratase from Cytophaga hutchinsonii (strain ATCC 33406 / DSM 1761 / CIP 103989 / NBRC 15051 / NCIMB 9469 / D465).